The primary structure comprises 468 residues: Ribulose bisphosphate carboxylase large chain (468 aa).

Lysine 5 carries the post-translational modification N6,N6,N6-trimethyllysine. The substrate site is built by asparagine 114 and threonine 164. The active-site Proton acceptor is lysine 166. Residue lysine 168 participates in substrate binding. Residues lysine 192, aspartate 194, and glutamate 195 each contribute to the Mg(2+) site. Lysine 192 carries the N6-carboxylysine modification. Histidine 285 serves as the catalytic Proton acceptor. The substrate site is built by arginine 286, histidine 318, and serine 370.

The protein belongs to the RuBisCO large chain family. Type I subfamily. As to quaternary structure, heterohexadecamer of 8 large chains and 8 small chains; disulfide-linked. The disulfide link is formed within the large subunit homodimers. Mg(2+) serves as cofactor. In terms of processing, the disulfide bond which can form in the large chain dimeric partners within the hexadecamer appears to be associated with oxidative stress and protein turnover.

It localises to the plastid. The protein localises to the chloroplast. The enzyme catalyses 2 (2R)-3-phosphoglycerate + 2 H(+) = D-ribulose 1,5-bisphosphate + CO2 + H2O. It catalyses the reaction D-ribulose 1,5-bisphosphate + O2 = 2-phosphoglycolate + (2R)-3-phosphoglycerate + 2 H(+). RuBisCO catalyzes two reactions: the carboxylation of D-ribulose 1,5-bisphosphate, the primary event in carbon dioxide fixation, as well as the oxidative fragmentation of the pentose substrate in the photorespiration process. Both reactions occur simultaneously and in competition at the same active site. This chain is Ribulose bisphosphate carboxylase large chain, found in Anthospermum herbaceum.